A 101-amino-acid polypeptide reads, in one-letter code: Small ribosomal subunit protein uS14 (101 aa).

This sequence belongs to the universal ribosomal protein uS14 family. In terms of assembly, part of the 30S ribosomal subunit. Contacts proteins S3 and S10.

In terms of biological role, binds 16S rRNA, required for the assembly of 30S particles and may also be responsible for determining the conformation of the 16S rRNA at the A site. This is Small ribosomal subunit protein uS14 from Chlamydia caviae (strain ATCC VR-813 / DSM 19441 / 03DC25 / GPIC) (Chlamydophila caviae).